Consider the following 159-residue polypeptide: Phosphopantetheine adenylyltransferase (159 aa).

Position 9 (threonine 9) interacts with substrate. ATP-binding positions include 9 to 10 (TF) and histidine 17. Residues lysine 41, leucine 73, and arginine 87 each contribute to the substrate site. Residues 88 to 90 (GLR), glutamate 98, and 123 to 129 (YAFLSST) each bind ATP.

The protein belongs to the bacterial CoaD family. Homohexamer. It depends on Mg(2+) as a cofactor.

Its subcellular location is the cytoplasm. The catalysed reaction is (R)-4'-phosphopantetheine + ATP + H(+) = 3'-dephospho-CoA + diphosphate. The protein operates within cofactor biosynthesis; coenzyme A biosynthesis; CoA from (R)-pantothenate: step 4/5. Reversibly transfers an adenylyl group from ATP to 4'-phosphopantetheine, yielding dephospho-CoA (dPCoA) and pyrophosphate. The sequence is that of Phosphopantetheine adenylyltransferase from Vibrio campbellii (strain ATCC BAA-1116).